Consider the following 113-residue polypeptide: Dynein light chain Tctex-type 1 (113 aa).

N-acetylmethionine is present on M1. The interaction with GNB1 stretch occupies residues 41–113 (QWTTNVLEQT…CIVSTFGLSI (73 aa)).

This sequence belongs to the dynein light chain Tctex-type family. In terms of assembly, homodimer. The cytoplasmic dynein 1 complex consists of two catalytic heavy chains (HCs) and a number of non-catalytic subunits presented by intermediate chains (ICs), light intermediate chains (LICs) and light chains (LCs); the composition seems to vary in respect to the IC, LIC and LC composition. The heavy chain homodimer serves as a scaffold for the probable homodimeric assembly of the respective non-catalytic subunits. The ICs and LICs bind directly to the HC dimer and the LCs assemble on the IC dimer. DYNLT1 and DYNLT3 compete for association with dynein IC (DYNC1I1 or DYNC1I2). Self-associates. Interacts with RHO. Interacts with DYNC1I1 and DYNC1I2. Interacts with DOC2A, DOC2B and SCN10A. Interacts with PVR. Interacts with SVIL isoform 2. Interacts with GNB1; the interaction occurs in presence of guanine nucleotide-binding protein G(T) subunit gamma; the interaction diminishes the association of DYNLT1 with dynein IC (DYNC1I1 or DYNC1I2). Interacts with GNB2, GNB3 and GNB5; the interactions occur in presence of guanine nucleotide-binding protein G(T) subunit gamma. Interacts with ACVR2B and ARHGEF2. Interacts with DNAI4. Interacts with CFAP61. In terms of processing, phosphorylated by BMPR2. The phosphorylation status is proposed to regulate the association with the cytoplasmic dynein complex and may have role in cytoplasmic dynein cargo release. As to expression, high level in testis (germ cell-specific). Expressed in sperm (at protein level). 200-fold lower in liver, brain, heart, spleen, and kidney. Levels in thymus and two embryonal carcinoma cell lines were several-fold higher than this low constitutive level.

It localises to the golgi apparatus. The protein resides in the cytoplasm. Its subcellular location is the cytoskeleton. It is found in the spindle. Acts as one of several non-catalytic accessory components of the cytoplasmic dynein 1 complex that are thought to be involved in linking dynein to cargos and to adapter proteins that regulate dynein function. Cytoplasmic dynein 1 acts as a motor for the intracellular retrograde motility of vesicles and organelles along microtubules. Binds to transport cargos and is involved in apical cargo transport such as rhodopsin-bearing vesicles in polarized epithelia. May also be a accessory component of axonemal dynein. Plays an important role in male germ cell development and function. Candidate for involvement in male sterility. In terms of biological role, plays a role in neuronal morphogenesis; the function is independent of cytoplasmic dynein and seems to be coupled to regulation of the actin cytoskeleton by enhancing Rac1 activity. The function in neurogenesis may be regulated by association with a G-protein beta-gamma dimer. May function as a receptor-independent activator of heterotrimeric G-protein signaling; the activation appears to be independent of a nucleotide exchange. Plays a role in regulating neurogenesis; inhibits the genesis of neurons from precursor cells during cortical development presumably by antagonizing ARHGEF2. Unrelated to the role in retrograde microtubule-associated movement may play a role in the dimerization of cytoplasmic proteins/domains such as for ACVR2B. Binds to the cytoplasmic domain of ACVR2B and, in vitro, inhibits ACVR2B signaling. Involved in the regulation of mitotic spindle orientation. The polypeptide is Dynein light chain Tctex-type 1 (Dynlt1) (Mus musculus (Mouse)).